The sequence spans 125 residues: Fluoride-specific ion channel FluC (125 aa).

4 helical membrane passes run 1–21 (MIQA…RYYV), 32–52 (AFPW…GVFA), 68–88 (LLIT…LDAI), and 101–121 (IYTV…LAVM). Na(+) is bound by residues Gly-75 and Thr-78.

This sequence belongs to the fluoride channel Fluc/FEX (TC 1.A.43) family.

It localises to the cell inner membrane. It carries out the reaction fluoride(in) = fluoride(out). Na(+) is not transported, but it plays an essential structural role and its presence is essential for fluoride channel function. Fluoride-specific ion channel. Important for reducing fluoride concentration in the cell, thus reducing its toxicity. This is Fluoride-specific ion channel FluC from Rhizobium leguminosarum bv. trifolii (strain WSM2304).